Consider the following 280-residue polypeptide: Beta carbonic anhydrase 4 (280 aa).

A2 is modified (N-acetylalanine). Positions 47 to 76 (NVAAAKIKALTAELKELDSSNSDAIERIKT) form a coiled coil. The residue at position 57 (T57) is a Phosphothreonine. S117 bears the Phosphoserine mark. C223 bears the S-nitrosocysteine mark.

It belongs to the beta-class carbonic anhydrase family. As to quaternary structure, interacts with DTX56. In terms of tissue distribution, strongly expressed in aerial tissues including leaves, stems, flowers and siliques. Accumulates in both guard cells and mesophyll cells.

It is found in the cell membrane. The catalysed reaction is hydrogencarbonate + H(+) = CO2 + H2O. Its function is as follows. Reversible hydration of carbon dioxide. Together with BCA1, involved in the CO(2) signaling pathway which controls gas-exchange between plants and the atmosphere by modulating stomatal development and movements. Promotes water use efficiency. The sequence is that of Beta carbonic anhydrase 4 from Arabidopsis thaliana (Mouse-ear cress).